We begin with the raw amino-acid sequence, 282 residues long: Dihydroorotate dehydrogenase B (NAD(+)), electron transfer subunit homolog (282 aa).

An FAD-binding FR-type domain is found at 2–100; sequence GGTALNEIVK…VGPLGNPSEI (99 aa). [2Fe-2S] cluster is bound by residues cysteine 225, cysteine 228, and cysteine 240.

It belongs to the PyrK family. [2Fe-2S] cluster is required as a cofactor. FAD serves as cofactor.

This chain is Dihydroorotate dehydrogenase B (NAD(+)), electron transfer subunit homolog, found in Thermotoga maritima (strain ATCC 43589 / DSM 3109 / JCM 10099 / NBRC 100826 / MSB8).